A 92-amino-acid polypeptide reads, in one-letter code: Small ribosomal subunit protein uS19 (92 aa).

Belongs to the universal ribosomal protein uS19 family.

Functionally, protein S19 forms a complex with S13 that binds strongly to the 16S ribosomal RNA. The protein is Small ribosomal subunit protein uS19 of Macrococcus caseolyticus (strain JCSC5402) (Macrococcoides caseolyticum).